Reading from the N-terminus, the 182-residue chain is Transcription termination/antitermination protein NusG (182 aa).

The KOW domain occupies 131–163; the sequence is VGEQVRIQSGPFANQIGEVQEIEADKFKLTVLV.

It belongs to the NusG family.

Functionally, participates in transcription elongation, termination and antitermination. The protein is Transcription termination/antitermination protein NusG of Staphylococcus epidermidis (strain ATCC 35984 / DSM 28319 / BCRC 17069 / CCUG 31568 / BM 3577 / RP62A).